The primary structure comprises 503 residues: Cytosolic carboxypeptidase 6 (503 aa).

A Peptidase M14 domain is found at 167–438 (YPYTYTRFQH…NVARTFLDYY (272 aa)). His-230, Glu-233, and His-328 together coordinate Zn(2+). Catalysis depends on Glu-401, which acts as the Proton donor/acceptor. Composition is skewed to basic and acidic residues over residues 459–469 (IEVQRRKEKSP) and 487–503 (KGDKKSSVNHKDPSTPF). The interval 459–503 (IEVQRRKEKSPPYKHPLLRGPASNYPNSKGDKKSSVNHKDPSTPF) is disordered.

This sequence belongs to the peptidase M14 family. As to quaternary structure, interacts with MYLK. Zn(2+) serves as cofactor.

It localises to the cytoplasm. It is found in the cytosol. The protein localises to the cytoskeleton. The protein resides in the microtubule organizing center. Its subcellular location is the centrosome. It localises to the centriole. It is found in the golgi apparatus. The protein localises to the cilium basal body. It catalyses the reaction (L-glutamyl)(n+1)-gamma-L-glutamyl-L-glutamyl-[protein] + H2O = (L-glutamyl)(n)-gamma-L-glutamyl-L-glutamyl-[protein] + L-glutamate. The catalysed reaction is C-terminal L-alpha-aminoacyl-L-glutamyl-L-glutamyl-[tubulin] + H2O = C-terminal L-alpha-aminoacyl-L-glutamyl-[tubulin] + L-glutamate. Metallocarboxypeptidase that mediates protein deglutamylation of tubulin and non-tubulin target proteins. Catalyzes the removal of polyglutamate side chains present on the gamma-carboxyl group of glutamate residues within the C-terminal tail of tubulin protein. Specifically cleaves tubulin long-side-chains, while it is not able to remove the branching point glutamate. Also catalyzes the removal of polyglutamate residues from the carboxy-terminus of non-tubulin proteins such as MYLK. Mediates the deglutamylation of nucleotidyltransferase CGAS, leading to CGAS antiviral defense response activation. Involved in KLF4 deglutamylation which promotes KLF4 proteasome-mediated degradation, thereby negatively regulating cell pluripotency maintenance and embryogenesis. The polypeptide is Cytosolic carboxypeptidase 6 (Homo sapiens (Human)).